A 474-amino-acid chain; its full sequence is Transcription factor fscB (474 aa).

Disordered stretches follow at residues 114–153 (VDEL…SYWT) and 207–242 (GKEV…NPAP). The segment covering 120–131 (SSDTRSSLSPSS) has biased composition (low complexity). Positions 132 to 153 (HNTTTGHETGLSSVTPPQSYWT) are enriched in polar residues. Positions 207–221 (GKEVTKRNKRSRTEA) are enriched in basic and acidic residues. Residues 222 to 240 (QEASNSPCASSTADSQTNP) show a composition bias toward polar residues.

The protein belongs to the POU transcription factor family. Class-3 subfamily.

It is found in the nucleus. In terms of biological role, transcription factor; part of the fragmented gene cluster that mediates the biosynthesis of fusarochromene, a tryptophan-derived metabolite closely related to a group of mycotoxins including fusarochromanone. This chain is Transcription factor fscB, found in Fusarium equiseti (Fusarium scirpi).